The primary structure comprises 181 residues: Glucose-1-phosphate adenylyltransferase large subunit 2 (181 aa).

This sequence belongs to the bacterial/plant glucose-1-phosphate adenylyltransferase family. In terms of assembly, heterotetramer. As to expression, leaves.

The protein localises to the plastid. The protein resides in the chloroplast. It localises to the amyloplast. The catalysed reaction is alpha-D-glucose 1-phosphate + ATP + H(+) = ADP-alpha-D-glucose + diphosphate. It functions in the pathway glycan biosynthesis; starch biosynthesis. Its activity is regulated as follows. Highly active without 3'phosphoglycerate, and is only slightly affected by the activator 3'phosphoglycerate and inhibitor orthophosphate. Its function is as follows. This protein plays a role in synthesis of starch. It catalyzes the synthesis of the activated glycosyl donor, ADP-glucose from Glc-1-P and ATP. The protein is Glucose-1-phosphate adenylyltransferase large subunit 2 of Hordeum vulgare (Barley).